Consider the following 458-residue polypeptide: Serine protease Do-like HtrB (458 aa).

Basic and acidic residues predominate over residues 1–18 (MDYRRDGQNDQHQTEPSH). Residues 1-42 (MDYRRDGQNDQHQTEPSHTEQQNTENQKLIGHSEQELLDAPV) are disordered. The Cytoplasmic portion of the chain corresponds to 1-71 (MDYRRDGQND…TAVKKEKKRR (71 aa)). A helical transmembrane segment spans residues 72-92 (AAWLSPILGGIIGGGLMLGIA). At 93-458 (PYLPSDQNQA…LTKQTESSSS (366 aa)) the chain is on the extracellular side. The interval 146–170 (QTSQNNTFGTGGGSSSESESGTGSG) is disordered. Active-site charge relay system residues include histidine 187, aspartate 217, and serine 298. Residues 296–298 (GNS) and 352–356 (LGVQM) each bind substrate. The PDZ domain maps to 356-440 (MIDMSQVPET…KTTIQVLRKG (85 aa)).

Belongs to the peptidase S1C family.

The protein localises to the cell membrane. The catalysed reaction is Acts on substrates that are at least partially unfolded. The cleavage site P1 residue is normally between a pair of hydrophobic residues, such as Val-|-Val.. Degrades abnormal exported proteins and responsible for the propeptide processing of a natural pro-protein and for the maturation of a native protein. It also plays a prominent role in stress (heat shock, ethanol, puromycin and NaCl) resistance during active exponential growth. This chain is Serine protease Do-like HtrB (htrB), found in Bacillus subtilis (strain 168).